The chain runs to 1037 residues: Guanine nucleotide-binding protein G(s) subunit alpha isoforms XLas (1037 aa).

Disordered stretches follow at residues 1–105 (MGVR…MPFE), 185–224 (APGGPGAAGVPGAPPEEPQALRPAKAGSRGGYSPPPEETM), 283–588 (SPSQ…TSGC), and 640–666 (PLAEKRRQMRKEALEKRAQKRAEKKRS). Over residues 33 to 46 (APGAAAPGAGPSPA) the composition is skewed to low complexity. The span at 343–354 (PDKRERAERPPV) shows a compositional bias: basic and acidic residues. 2 stretches are compositionally biased toward low complexity: residues 361–408 (MEGA…GATP) and 416–521 (APAD…PASG). Basic and acidic residues predominate over residues 553–565 (GKSESSRGRRVYY). Positions 572-583 (SDDDSSGDESDD) are enriched in acidic residues. Basic and acidic residues predominate over residues 640–660 (PLAEKRRQMRKEALEKRAQKR). Residues 641–667 (LAEKRRQMRKEALEKRAQKRAEKKRSK) adopt a coiled-coil conformation. One can recognise a G-alpha domain in the interval 682 to 1037 (CTHRLLLLGA…RMHLRQYELL (356 aa)). The tract at residues 685–698 (RLLLLGAGESGKST) is G1 motif. 690–698 (GAGESGKST) serves as a coordination point for GTP. S697 is a binding site for Mg(2+). Residues 711–734 (FNGEGGEEDPQAARSNSDGEKATK) form a disordered region. The stretch at 730-756 (EKATKVQDIKNNLKEAIETIVAAMSNL) forms a coiled coil. A G2 motif region spans residues 839–847 (DLLRCRVLT). GTP is bound by residues 840–847 (LLRCRVLT), 866–870 (DVGGQ), and 935–938 (NKQD). R844 bears the ADP-ribosylarginine; by cholera toxin mark. T847 lines the Mg(2+) pocket. A G3 motif region spans residues 862 to 871 (FHMFDVGGQR). Residues 931-938 (ILFLNKQD) are G4 motif. At S995 the chain carries Phosphoserine. A G5 motif region spans residues 1007 to 1012 (TCAVDT). A1009 provides a ligand contact to GTP.

Belongs to the G-alpha family. G(s) subfamily. As to quaternary structure, g proteins are composed of 3 units; alpha, beta and gamma. The alpha chain contains the guanine nucleotide binding site. Interacts through its N-terminal region with ALEX which is produced from the same locus in a different open reading frame. This interaction may inhibit its adenylyl cyclase-stimulating activity. Interacts with MAGED2.

Its subcellular location is the cell membrane. The protein resides in the apical cell membrane. It carries out the reaction GTP + H2O = GDP + phosphate + H(+). Functionally, guanine nucleotide-binding proteins (G proteins) function as transducers in numerous signaling pathways controlled by G protein-coupled receptors (GPCRs). The alpha chain contains the guanine nucleotide binding site and alternates between an active, GTP-bound state and an inactive, GDP-bound state. Signaling by an activated GPCR promotes GDP release and GTP binding. The alpha subunit has a low GTPase activity that converts bound GTP to GDP, thereby terminating the signal. Both GDP release and GTP hydrolysis are modulated by numerous regulatory proteins. Signaling involves the activation of adenylyl cyclases, resulting in increased levels of the signaling molecule cAMP. GNAS functions downstream of several GPCRs, including beta-adrenergic receptors. XLas isoforms interact with the same set of receptors as Gnas isoforms. This is Guanine nucleotide-binding protein G(s) subunit alpha isoforms XLas (GNAS) from Homo sapiens (Human).